The chain runs to 336 residues: Dihydroorotate dehydrogenase (quinone) (336 aa).

Residues 62–66 (AGLDK) and T86 each bind FMN. A substrate-binding site is contributed by K66. 111–115 (NRMGF) provides a ligand contact to substrate. FMN is bound by residues N139 and N172. N172 provides a ligand contact to substrate. The active-site Nucleophile is the S175. N177 contributes to the substrate binding site. The FMN site is built by K217 and T245. 246 to 247 (NT) contributes to the substrate binding site. Residues G268, G297, and 318 to 319 (YS) each bind FMN.

This sequence belongs to the dihydroorotate dehydrogenase family. Type 2 subfamily. As to quaternary structure, monomer. FMN is required as a cofactor.

It localises to the cell membrane. It carries out the reaction (S)-dihydroorotate + a quinone = orotate + a quinol. Its pathway is pyrimidine metabolism; UMP biosynthesis via de novo pathway; orotate from (S)-dihydroorotate (quinone route): step 1/1. Functionally, catalyzes the conversion of dihydroorotate to orotate with quinone as electron acceptor. This chain is Dihydroorotate dehydrogenase (quinone), found in Salmonella typhi.